The primary structure comprises 206 residues: Small ribosomal subunit protein uS4 (206 aa).

The S4 RNA-binding domain maps to T93–Q153.

It belongs to the universal ribosomal protein uS4 family. In terms of assembly, part of the 30S ribosomal subunit. Contacts protein S5. The interaction surface between S4 and S5 is involved in control of translational fidelity.

Its function is as follows. One of the primary rRNA binding proteins, it binds directly to 16S rRNA where it nucleates assembly of the body of the 30S subunit. In terms of biological role, with S5 and S12 plays an important role in translational accuracy. In Bifidobacterium animalis subsp. lactis (strain AD011), this protein is Small ribosomal subunit protein uS4.